The sequence spans 106 residues: UPF0145 protein Dhaf_3855 (106 aa).

It belongs to the UPF0145 family.

The polypeptide is UPF0145 protein Dhaf_3855 (Desulfitobacterium hafniense (strain DSM 10664 / DCB-2)).